We begin with the raw amino-acid sequence, 176 residues long: ATP-dependent protease subunit HslV (176 aa).

Residue Thr2 is part of the active site. Residues Gly157, Cys160, and Thr163 each coordinate Na(+).

It belongs to the peptidase T1B family. HslV subfamily. In terms of assembly, a double ring-shaped homohexamer of HslV is capped on each side by a ring-shaped HslU homohexamer. The assembly of the HslU/HslV complex is dependent on binding of ATP.

The protein localises to the cytoplasm. The catalysed reaction is ATP-dependent cleavage of peptide bonds with broad specificity.. Allosterically activated by HslU binding. Functionally, protease subunit of a proteasome-like degradation complex believed to be a general protein degrading machinery. This is ATP-dependent protease subunit HslV from Ectopseudomonas mendocina (strain ymp) (Pseudomonas mendocina).